Reading from the N-terminus, the 333-residue chain is Glyceraldehyde-3-phosphate dehydrogenase (333 aa).

An N-acetylserine modification is found at S1. Residues 10–11, D31, and M76 each bind NAD(+); that span reads RI. D-glyceraldehyde 3-phosphate-binding positions include 147–149, T178, 207–208, and R230; these read SCT and TG. C148 functions as the Nucleophile in the catalytic mechanism. Position 312 (N312) interacts with NAD(+).

The protein belongs to the glyceraldehyde-3-phosphate dehydrogenase family. In terms of assembly, homotetramer.

The protein resides in the cytoplasm. It carries out the reaction D-glyceraldehyde 3-phosphate + phosphate + NAD(+) = (2R)-3-phospho-glyceroyl phosphate + NADH + H(+). The protein operates within carbohydrate degradation; glycolysis; pyruvate from D-glyceraldehyde 3-phosphate: step 1/5. This is Glyceraldehyde-3-phosphate dehydrogenase from Panulirus versicolor (Painted spiny lobster).